A 451-amino-acid polypeptide reads, in one-letter code: 3-phosphoshikimate 1-carboxyvinyltransferase (451 aa).

Residues Lys38, Ser39, and Arg43 each coordinate 3-phosphoshikimate. Phosphoenolpyruvate is bound at residue Lys38. Residues Gly111 and Arg140 each contribute to the phosphoenolpyruvate site. The 3-phosphoshikimate site is built by Ser185, Gln187, Asp335, and Lys362. Residue Gln187 coordinates phosphoenolpyruvate. Residue Asp335 is the Proton acceptor of the active site. Phosphoenolpyruvate is bound by residues Arg366 and Arg408.

The protein belongs to the EPSP synthase family. In terms of assembly, monomer.

Its subcellular location is the cytoplasm. It catalyses the reaction 3-phosphoshikimate + phosphoenolpyruvate = 5-O-(1-carboxyvinyl)-3-phosphoshikimate + phosphate. The protein operates within metabolic intermediate biosynthesis; chorismate biosynthesis; chorismate from D-erythrose 4-phosphate and phosphoenolpyruvate: step 6/7. In terms of biological role, catalyzes the transfer of the enolpyruvyl moiety of phosphoenolpyruvate (PEP) to the 5-hydroxyl of shikimate-3-phosphate (S3P) to produce enolpyruvyl shikimate-3-phosphate and inorganic phosphate. This chain is 3-phosphoshikimate 1-carboxyvinyltransferase, found in Crocosphaera subtropica (strain ATCC 51142 / BH68) (Cyanothece sp. (strain ATCC 51142)).